Here is a 366-residue protein sequence, read N- to C-terminus: Histidinol-phosphate aminotransferase (366 aa).

The residue at position 228 (K228) is an N6-(pyridoxal phosphate)lysine.

The protein belongs to the class-II pyridoxal-phosphate-dependent aminotransferase family. Histidinol-phosphate aminotransferase subfamily. As to quaternary structure, homodimer. The cofactor is pyridoxal 5'-phosphate.

The enzyme catalyses L-histidinol phosphate + 2-oxoglutarate = 3-(imidazol-4-yl)-2-oxopropyl phosphate + L-glutamate. It functions in the pathway amino-acid biosynthesis; L-histidine biosynthesis; L-histidine from 5-phospho-alpha-D-ribose 1-diphosphate: step 7/9. This Campylobacter fetus subsp. fetus (strain 82-40) protein is Histidinol-phosphate aminotransferase.